The following is an 833-amino-acid chain: A disintegrin and metalloproteinase with thrombospondin motifs 4 (833 aa).

The first 49 residues, 1 to 49 (MSQMGLHPRRGLTGHWLQRFQPCLPLHTVQWRRLLLLAFLLSLAWPASP), serve as a signal peptide directing secretion. A propeptide spanning residues 50–208 (LPREEEIVFP…PSPISRRTKR (159 aa)) is cleaved from the precursor. Asn63 carries N-linked (GlcNAc...) asparagine glycosylation. The tract at residues 180–204 (KSPASSQGPMCTVKAPSGSPSPISR) is disordered. A Cysteine switch motif is present at residues 188–195 (PMCTVKAP). Cys190 provides a ligand contact to Zn(2+). Residues 214-424 (RFVETLVVAD…GYGHCLLDKP (211 aa)) form the Peptidase M12B domain. 11 cysteine pairs are disulfide-bonded: Cys289-Cys341, Cys318-Cys323, Cys335-Cys419, Cys373-Cys403, Cys445-Cys468, Cys456-Cys478, Cys463-Cys497, Cys491-Cys502, Cys528-Cys565, Cys532-Cys570, and Cys543-Cys555. An N-linked (GlcNAc...) asparagine glycan is attached at Asn299. Residue His357 coordinates Zn(2+). Glu358 is an active-site residue. Residues His361 and His367 each contribute to the Zn(2+) site. One can recognise a Disintegrin domain in the interval 433-515 (TFPGKDYDAD…DQLKDFNVPQ (83 aa)). The TSP type-1 domain maps to 516 to 571 (AGGWGPWGPWGDCSRTCGGGVQFSSRDCTRPVPRNGGKYCEGRRTRFRSCNTENCP). Residues 682 to 833 (SKQSGSFKKF…LRKRPWAGRK (152 aa)) are spacer.

In terms of assembly, interacts with SRPX2. Zn(2+) is required as a cofactor. In terms of processing, the precursor is cleaved by a furin endopeptidase. Post-translationally, glycosylated. Can be O-fucosylated by POFUT2 on a serine or a threonine residue found within the consensus sequence C1-X(2)-(S/T)-C2-G of the TSP type-1 repeat domains where C1 and C2 are the first and second cysteine residue of the repeat, respectively. Fucosylated repeats can then be further glycosylated by the addition of a beta-1,3-glucose residue by the glucosyltransferase, B3GALTL. Fucosylation mediates the efficient secretion of ADAMTS family members. Can also be C-glycosylated with one or two mannose molecules on tryptophan residues within the consensus sequence W-X-X-W of the TPRs, and N-glycosylated. These other glycosylations can also facilitate secretion.

It localises to the secreted. Its subcellular location is the extracellular space. The protein localises to the extracellular matrix. The enzyme catalyses Glutamyl endopeptidase. Bonds cleaved include 370-Thr-Glu-Gly-Glu-|-Ala-Arg-Gly-Ser-377 in the interglobular domain of mammalian aggrecan.. In terms of biological role, cleaves aggrecan, a cartilage proteoglycan, at the '392-Glu-|-Ala-393' site and may be involved in its turnover. Also cleaves COMP. May play an important role in the destruction of aggrecan in arthritic diseases. The sequence is that of A disintegrin and metalloproteinase with thrombospondin motifs 4 (Adamts4) from Mus musculus (Mouse).